A 265-amino-acid polypeptide reads, in one-letter code: Sulfur carrier protein FdhD (265 aa).

Catalysis depends on Cys107, which acts as the Cysteine persulfide intermediate.

This sequence belongs to the FdhD family.

Its subcellular location is the cytoplasm. Functionally, required for formate dehydrogenase (FDH) activity. Acts as a sulfur carrier protein that transfers sulfur from IscS to the molybdenum cofactor prior to its insertion into FDH. In Staphylococcus aureus (strain JH9), this protein is Sulfur carrier protein FdhD.